The chain runs to 753 residues: Neuroendocrine convertase 1 (753 aa).

An N-terminal signal peptide occupies residues 1–27; that stretch reads MEQRGWTLQCTAFAFFCVWCALSSVKA. The propeptide occupies 28-110; the sequence is KRQFVNEWAA…QQYEKERSKR (83 aa). A Peptidase S8 domain is found at 129 to 450; it reads QWYLQDTRMT…FGLLNAKALV (322 aa). Residues aspartate 167 and histidine 208 each act as charge relay system in the active site. Disulfide bonds link cysteine 225-cysteine 374 and cysteine 317-cysteine 347. Serine 382 acts as the Charge relay system in catalysis. Asparagine 401 carries N-linked (GlcNAc...) asparagine glycosylation. Positions 460–597 constitute a P/Homo B domain; that stretch reads NVPEKKECVV…KLILHGTSSQ (138 aa). A disulfide bond links cysteine 467 and cysteine 494. Polar residues predominate over residues 633–651; that stretch reads QKSLNGNLLVPKNSSSSNV. The segment at 633–663 is disordered; sequence QKSLNGNLLVPKNSSSSNVEGRRDEQVQGTP. A glycan (N-linked (GlcNAc...) asparagine) is linked at asparagine 645.

Belongs to the peptidase S8 family. Furin subfamily. Ca(2+) serves as cofactor.

It is found in the cytoplasmic vesicle. The protein resides in the secretory vesicle. The catalysed reaction is Release of protein hormones, neuropeptides and renin from their precursors, generally by hydrolysis of -Lys-Arg-|- bonds.. Its function is as follows. Involved in the processing of hormone and other protein precursors at sites comprised of pairs of basic amino acid residues. Substrates include POMC, renin, enkephalin, dynorphin, somatostatin, insulin and AGRP. In Mus cookii (Cook's mouse), this protein is Neuroendocrine convertase 1 (Pcsk1).